The chain runs to 87 residues: Small ribosomal subunit protein bS20 (87 aa).

Positions 1–26 (MANTKSALKRIRQTATRTARNRAVTS) are disordered. Residues 13 to 23 (QTATRTARNRA) are compositionally biased toward low complexity.

The protein belongs to the bacterial ribosomal protein bS20 family.

Binds directly to 16S ribosomal RNA. The polypeptide is Small ribosomal subunit protein bS20 (Akkermansia muciniphila (strain ATCC BAA-835 / DSM 22959 / JCM 33894 / BCRC 81048 / CCUG 64013 / CIP 107961 / Muc)).